A 106-amino-acid chain; its full sequence is Transcription initiation factor IIA subunit 2 (106 aa).

It belongs to the TFIIA subunit 2 family. TFIIA is a heterodimer of the large unprocessed subunit 1 and a small subunit gamma. It was originally believed to be a heterotrimer of an alpha (p30), a beta (p20) and a gamma (p14) subunit. Forms a complex with Moonshiner/CG12721 and Trf2. Ubiquitous.

It is found in the nucleus. Its function is as follows. TFIIA is a component of the transcription machinery of RNA polymerase II and plays an important role in transcriptional activation. TFIIA in a complex with TBP mediates transcriptional activity. Part of a rhi-dependent transcription machinery that enables the generation of piRNA precursors from heterochromatin while maintaining the suppression of transposon-encoded promoters and enhancers. Forms a complex with Moonshiner/CG12721 and Trf2 which recruit transcriptional machinery to heterochromatin to initiate the bidirectional transcription of piRNA clusters, by interacting with the RDC (rhi, del and cuff) complex that binds to repressive H3K9me3 marks in the chromatin. This mechanism allows transcription to occur in piRNA clusters despite the lack of proper promoter elements and in the presence of the repressive H3K9me3 mark. This Drosophila melanogaster (Fruit fly) protein is Transcription initiation factor IIA subunit 2 (TfIIA-S).